The sequence spans 275 residues: Methylglyoxal reductase DkgA (275 aa).

The active-site Proton donor is the tyrosine 51. Histidine 107 provides a ligand contact to substrate. Residue 187 to 241 (SPLAQGGKGVFDQKVIRDLADKYGKTPAQIVIRWHLDSGLVVIPKSVTPSRIAEN) coordinates NADP(+).

It belongs to the aldo/keto reductase family. In terms of assembly, monomer.

It is found in the cytoplasm. It carries out the reaction hydroxyacetone + NADP(+) = methylglyoxal + NADPH + H(+). The catalysed reaction is a primary alcohol + NADP(+) = an aldehyde + NADPH + H(+). It catalyses the reaction 2-dehydro-L-idonate + NADP(+) = 2,5-didehydro-D-gluconate + NADPH + H(+). Its function is as follows. Aldo-keto reductase that significantly contributes to cellular methylglyoxal detoxification by catalyzing the NADPH-dependent conversion of methylglyoxal to acetol. It also exhibits fairly high activity with glyoxal. Shows broad specificity and can use aromatic aldehydes such as 4-nitrobenzaldehyde, 3-nitrobenzaldehyde and benzaldehyde, and phenylglyoxal. Shows beta-keto ester reductase activity toward ethyl acetoacetate and a variety of 2-substituted derivatives. Also catalyzes the reduction of 2,5-diketo-D-gluconic acid (25DKG) to 2-keto-L-gulonic acid (2KLG) and could be involved in ketogluconate metabolism. However, the specific activity of the enzyme toward 2,5-diketo-D-gluconate was reported to be almost 400-fold lower than its activity toward methylglyoxal. Can catalyze in vitro the NADPH-dependent reduction of furfural, a natural product of lignocellulosic decomposition, to the less toxic product, furfuryl alcohol. However, it is unlikely that furfural is a physiological substrate. The protein is Methylglyoxal reductase DkgA of Escherichia coli (strain K12).